The primary structure comprises 618 residues: MPIQVLPPQLANQIAAGEVVERPASVVKELVENSLDAGATRVDIDIERGGAKLIRIRDNGCGIKKEELALALARHATSKIASLDDLEAIISLGFRGEALASISSVSRLTLTSRTAEQAEAWQAYAEGRDMDVTVKPAAHPVGTTLEVLDLFYNTPARRKFMRTEKTEFNHIDEIIRRIALARFDVTLNLSHNGKLVRQYRAVAKDGQKERRLGAICGTPFLEQALAIEWQHGDLTLRGWVADPNHTTTALTEIQYCYVNGRMMRDRLINHAIRQACEDKLGADQQPAFVLYLEIDPHQVDVNVHPAKHEVRFHQSRLVHDFIYQGVLSVLQQQTETTLPLEDIAPAPRHVPENRIAAGRNHFAVPAEPTAAREPATPRYSGGTSGGNGGRQSAGGWPHAQPGYQKPQGEVYRTLLQTPATSPAPEPVAPALDGHSQSFGRVLTIVGGDCALLEHAGTIQLLSLPVAERWLRQAQLTPGQSPVCAQPLLIPLRLKVSADEKAALQQAQSLLGELGIEFQSDAQHVTIRAVPLPLRQQNLQILIPELIGYLAQQTTFATVNIAQWIARNVQSEHPQWSMAQAISLLADVERLCPQLVKAPPGGLLQPVDLHSAMNALKHE.

Residues 366–381 are compositionally biased toward low complexity; it reads AEPTAAREPATPRYSG. The tract at residues 366–405 is disordered; that stretch reads AEPTAAREPATPRYSGGTSGGNGGRQSAGGWPHAQPGYQK. Positions 382–392 are enriched in gly residues; it reads GTSGGNGGRQS.

This sequence belongs to the DNA mismatch repair MutL/HexB family.

In terms of biological role, this protein is involved in the repair of mismatches in DNA. It is required for dam-dependent methyl-directed DNA mismatch repair. May act as a 'molecular matchmaker', a protein that promotes the formation of a stable complex between two or more DNA-binding proteins in an ATP-dependent manner without itself being part of a final effector complex. This Salmonella agona (strain SL483) protein is DNA mismatch repair protein MutL.